Consider the following 523-residue polypeptide: Effector protein hopAB1 (523 aa).

Disordered regions lie at residues 1 to 94 (MPGI…EAQQ), 165 to 223 (VRQQ…QGLD), and 299 to 320 (RQTTTNSPELPPLASSAESGRR). Positions 18-31 (TDGEPVTEREHDSS) are enriched in basic and acidic residues. Residues 181–194 (SSSGSSQRSLIGRS) are compositionally biased toward low complexity.

The protein belongs to the HopAB family.

The protein localises to the secreted. Its function is as follows. Effector protein that plays different roles depending on the species and plant cultivars that interact with the pathogen. Acts as a virulence determinant by enhancing the development of disease symptoms and bacterial growth. Acts as an avirulence factor by eliciting hypersensitive response (HR) and plant resistance. This is Effector protein hopAB1 (hopAB1) from Pseudomonas savastanoi pv. glycinea (Pseudomonas syringae pv. glycinea).